The chain runs to 533 residues: Calcium-dependent protein kinase 19 (533 aa).

Polar residues-rich tracts occupy residues 1-12 (MGSCCSRATSPD) and 24-38 (SHQT…SYNH). A disordered region spans residues 1–53 (MGSCCSRATSPDSGRGGANGYGYSHQTKPAQTTPSYNHPQPPPPAEVRYTPSA). G2 is lipidated: N-myristoyl glycine. One can recognise a Protein kinase domain in the interval 85-343 (YSLGKELGRG…SAQVLQHPWL (259 aa)). Residues 91–99 (LGRGQFGVT) and K114 contribute to the ATP site. D209 acts as the Proton acceptor in catalysis. The segment at 348-378 (ASDKPIDSAVLSRMKQFRAMNKLKKMALKVI) is autoinhibitory domain. EF-hand domains are found at residues 385–420 (EEIK…LGSK), 421–456 (LSEA…RHKL), 457–492 (ERDE…HEMG), and 497–527 (IKDI…GGMQ). Ca(2+)-binding residues include D398, D400, S402, T404, E409, D434, D436, N438, S440, E445, D470, D472, S474, E481, D505, D507, D509, R511, and E516.

It belongs to the protein kinase superfamily. Ser/Thr protein kinase family. CDPK subfamily. In terms of tissue distribution, expressed in root tips, leaf veins, mesophyll cells, flower reproductive organs and mature pollen grains.

Its subcellular location is the membrane. It carries out the reaction L-seryl-[protein] + ATP = O-phospho-L-seryl-[protein] + ADP + H(+). It catalyses the reaction L-threonyl-[protein] + ATP = O-phospho-L-threonyl-[protein] + ADP + H(+). Its activity is regulated as follows. Activated by calcium. Autophosphorylation may play an important role in the regulation of the kinase activity. Functionally, may play a role in signal transduction pathways that involve calcium as a second messenger. The sequence is that of Calcium-dependent protein kinase 19 from Oryza sativa subsp. japonica (Rice).